Reading from the N-terminus, the 848-residue chain is Probable disease resistance protein At5g43730 (848 aa).

Positions Ser25–Lys62 form a coiled coil. An NB-ARC domain is found at Val137–Tyr439. Gly179–Thr186 is a binding site for ATP. LRR repeat units lie at residues Asn534 to Phe555, Lys558 to Leu580, Ser582 to Arg604, Lys605 to Leu627, and Asn629 to Glu649.

It belongs to the disease resistance NB-LRR family.

In terms of biological role, probable disease resistance protein. The chain is Probable disease resistance protein At5g43730 from Arabidopsis thaliana (Mouse-ear cress).